We begin with the raw amino-acid sequence, 335 residues long: NADH-quinone oxidoreductase subunit H (335 aa).

The next 8 helical transmembrane spans lie at 11–31 (VILTVVKAIVILLAVVIAGAL), 81–101 (VIFTLAPVVAMSALLIAFAII), 114–134 (IGLLFFFAMAGLSVYAVLFAG), 154–174 (VSYEVFMGLALMGIVVQVGSF), 187–207 (LWFIIPQFFGFCTFFIAGVAV), 238–258 (FFVGEYIGIILISALLVTLFF), 270–290 (QLSFVWFALKTAFFIMLFILL), and 307–327 (WKFCLPLTLINLLITAAVVLW).

Belongs to the complex I subunit 1 family. In terms of assembly, NDH-1 is composed of 13 different subunits. Subunits NuoA, H, J, K, L, M, N constitute the membrane sector of the complex.

The protein resides in the cell inner membrane. The enzyme catalyses a quinone + NADH + 5 H(+)(in) = a quinol + NAD(+) + 4 H(+)(out). Its function is as follows. NDH-1 shuttles electrons from NADH, via FMN and iron-sulfur (Fe-S) centers, to quinones in the respiratory chain. The immediate electron acceptor for the enzyme in this species is believed to be ubiquinone. Couples the redox reaction to proton translocation (for every two electrons transferred, four hydrogen ions are translocated across the cytoplasmic membrane), and thus conserves the redox energy in a proton gradient. This subunit may bind ubiquinone. The polypeptide is NADH-quinone oxidoreductase subunit H (Pseudomonas fluorescens (strain ATCC BAA-477 / NRRL B-23932 / Pf-5)).